The following is a 731-amino-acid chain: T-cell activation Rho GTPase-activating protein (731 aa).

The Rho-GAP domain occupies 88 to 277 (QPLSIICGDS…FLIDNCFEIF (190 aa)). 3 disordered regions span residues 288–421 (TSDD…AEDP), 464–507 (SLDA…IKKH), and 641–662 (HHVEDSRHRGSKEPLPGHGLSP). The segment covering 299 to 311 (SDVSTLQNDSAYD) has biased composition (polar residues). Low complexity predominate over residues 319–329 (SNSSSGISSPS). Residues 380 to 399 (SMPSSQECLESRVTNQTLTK) are compositionally biased toward polar residues. S400 is modified (phosphoserine). A compositionally biased stretch (low complexity) spans 464–480 (SLDASSDSSPVASPSSP). Basic and acidic residues-rich tracts occupy residues 494–503 (KTEKGKPSRE) and 641–652 (HHVEDSRHRGSK).

Functionally, may function as a GTPase-activating protein and may play important roles during T-cell activation. The protein is T-cell activation Rho GTPase-activating protein (TAGAP) of Homo sapiens (Human).